Reading from the N-terminus, the 187-residue chain is Mitochondrial import receptor subunit TOM20-4 (187 aa).

The residue at position 1 (Met-1) is an N-acetylmethionine. Residues Met-1–Asp-160 are Cytoplasmic-facing. The TPR repeat unit spans residues Leu-84 to Ser-117. The chain crosses the membrane as a helical span at residues Val-161–Ala-178. Topologically, residues Asn-179–Gln-187 are mitochondrial intermembrane. The short motif at Asn-179–Gln-187 is the AKR2A-binding sequence (ABS) required for mitochondrion outer membrane targeting element.

It belongs to the Tom20 family. Forms part of the preprotein translocase complex of the outer mitochondrial membrane (TOM complex) which consists of at least 6 different proteins (TOM5, TOM6, TOM7, TOM20, TOM22/TOM9 and TOM40). Interacts with a variety of mitochondrial precursor proteins. Interacts with AKR2A. Component of a mitochondrial large protein complex that contains, at least, MIC60, DGS1, TOM40, TOM20 proteins, and petC/RISP. Post-translationally, the N-terminus is blocked. Expressed in roots, flowers, young cotyledons and leaves.

Its subcellular location is the mitochondrion outer membrane. Functionally, central component of the receptor complex responsible for the recognition and translocation of cytosolically synthesized mitochondrial preproteins. Together with TOM22 functions as the transit peptide receptor at the surface of the mitochondrion outer membrane and facilitates the movement of preproteins into the translocation pore. This chain is Mitochondrial import receptor subunit TOM20-4, found in Arabidopsis thaliana (Mouse-ear cress).